Here is a 612-residue protein sequence, read N- to C-terminus: Lysophospholipase (612 aa).

A signal peptide spans 1-9; that stretch reads DITFAGVQR. The PLA2c domain occupies 24–571; the sequence is SCPASRPTVR…DRYCWNGTVN (548 aa). 17 N-linked (GlcNAc...) asparagine glycosylation sites follow: Asn41, Asn81, Asn116, Asn150, Asn223, Asn267, Asn306, Asn335, Asn427, Asn440, Asn446, Asn477, Asn498, Asn526, Asn532, Asn567, and Asn571.

It belongs to the lysophospholipase family. N-glycosylated.

The protein localises to the secreted. It catalyses the reaction a 1-acyl-sn-glycero-3-phosphocholine + H2O = sn-glycerol 3-phosphocholine + a fatty acid + H(+). In terms of biological role, catalyzes the release of fatty acids from lysophospholipids. This Penicillium chrysogenum (Penicillium notatum) protein is Lysophospholipase.